An 86-amino-acid polypeptide reads, in one-letter code: MRKDIHPDYRPVVFLDTTTGYQFLSGSTKASKETVEFEGETYPLIRVEISSDSHPFYTGRQKFTQADGRVDRFNKKYGLKDANAAK.

Belongs to the bacterial ribosomal protein bL31 family. Type B subfamily. Part of the 50S ribosomal subunit.

In Streptococcus pyogenes serotype M1, this protein is Large ribosomal subunit protein bL31B.